The primary structure comprises 142 residues: Translation initiation factor 2 subunit beta (142 aa).

It belongs to the eIF-2-beta/eIF-5 family. In terms of assembly, heterotrimer composed of an alpha, a beta and a gamma chain.

Functionally, eIF-2 functions in the early steps of protein synthesis by forming a ternary complex with GTP and initiator tRNA. The chain is Translation initiation factor 2 subunit beta from Methanosphaera stadtmanae (strain ATCC 43021 / DSM 3091 / JCM 11832 / MCB-3).